A 398-amino-acid chain; its full sequence is E3 ubiquitin-protein ligase RSL1 (398 aa).

The tract at residues 155–374 (QKETCNICLN…LDLTQCCGSC (220 aa)) is TRIAD supradomain. Residues C159, C162, C183, C186, C246, C251, C271, C274, C279, C282, H287, C292, C321, and C324 each contribute to the Zn(2+) site. An RING-type 3; degenerate zinc finger spans residues 159–207 (CNICLNDDINADQMFSVDKSGHMCCSECVKRHIEVRLLEGSLITCPHYR). The RING-type 1 zinc finger occupies 159–208 (CNICLNDDINADQMFSVDKSGHMCCSECVKRHIEVRLLEGSLITCPHYRC). Residues 233 to 292 (TKDELIPVMDRVYCPNPRCSTLMSETELSGLNIGVRRCCVKCGEPFCVKCKVSWHNNLSC) form an IBR-type zinc finger. An RING-type 2; atypical zinc finger spans residues 321–349 (CSKCKHMIELSSGCISVVCRCGHTFCYQC). An RING-type 4; degenerate zinc finger spans residues 321–356 (CSKCKHMIELSSGCISVVCRCGHTFCYQCGADAGDC). C334 is an active-site residue. 6 residues coordinate Zn(2+): C339, C341, C346, C349, H358, and C370. A helical transmembrane segment spans residues 374–394 (CCCFVFFLVIIAIVVTIILLV).

This sequence belongs to the RBR family. As to quaternary structure, interacts with the PYL4 and PYR1 ABA receptors at the plasma membrane. Zn(2+) is required as a cofactor.

The protein localises to the cell membrane. It is found in the vacuole membrane. It carries out the reaction [E2 ubiquitin-conjugating enzyme]-S-ubiquitinyl-L-cysteine + [acceptor protein]-L-lysine = [E2 ubiquitin-conjugating enzyme]-L-cysteine + [acceptor protein]-N(6)-ubiquitinyl-L-lysine.. It functions in the pathway protein modification; protein ubiquitination. Acts as an E3 ubiquitin-protein ligase, or as part of E3 complex, which accepts ubiquitin from specific E2 ubiquitin-conjugating enzymes and then transfers it to substrates. Negative regulator of the abscisic acid (ABA) signaling pathway which targets PYL4 and PYR1 ABA receptors in plasma membrane to promote their FREE1/FYVE1-dependent trafficking and degradation upon ubiquitynation; this process involves clathrin-mediated endocytosis and trafficking through the ESCRT pathway. Involved in the maintenance of seed longevity. May enhance gibberellins responses. The protein is E3 ubiquitin-protein ligase RSL1 of Arabidopsis thaliana (Mouse-ear cress).